A 326-amino-acid chain; its full sequence is Target of rapamycin complex subunit LST8 (326 aa).

At methionine 1 the chain carries N-acetylmethionine. 5 WD repeats span residues 1–37 (MNTT…CTRT), 40–80 (HQDS…PIIS), 83–122 (GVSK…LQCQ), 126–165 (QVNA…NEQL), and 168–207 (EPES…GDDV). At threonine 51 the chain carries Phosphothreonine. Lysine 86 participates in a covalent cross-link: Glycyl lysine isopeptide (Lys-Gly) (interchain with G-Cter in SUMO3). Residues lysine 215, lysine 245, and lysine 261 each participate in a glycyl lysine isopeptide (Lys-Gly) (interchain with G-Cter in SUMO3) cross-link. A WD 6 repeat occupies 218–257 (AHTRYALQCRFSPDSTLLATCSADQTCKIWRTSNFSLMTE). The stretch at 268-309 (SSRGWMWGCAFSGDSQYIVTASSDNLARLWCVETGEIKREYG) is one WD 7 repeat. Lysine 305 participates in a covalent cross-link: Glycyl lysine isopeptide (Lys-Gly) (interchain with G-Cter in SUMO3); alternate. Glycyl lysine isopeptide (Lys-Gly) (interchain with G-Cter in ubiquitin); alternate cross-links involve residues lysine 305 and lysine 313. Lysine 313 is covalently cross-linked (Glycyl lysine isopeptide (Lys-Gly) (interchain with G-Cter in SUMO1); alternate).

Belongs to the WD repeat LST8 family. Part of the mechanistic target of rapamycin complex 1 (mTORC1) which contains MTOR, MLST8 and RPTOR. mTORC1 associates with AKT1S1/PRAS40, which inhibits its activity. mTORC1 binds to and is inhibited by FKBP12-rapamycin. Within mTORC1, interacts directly with MTOR and RPTOR. Component of the mechanistic target of rapamycin complex 2 (mTORC2), consisting in two heterotretramers composed of MTOR, MLST8, RICTOR and MAPKAP1/SIN1. Contrary to mTORC1, mTORC2 does not bind to and is not sensitive to FKBP12-rapamycin. mTORC1 and mTORC2 associate with DEPTOR, which regulates their activity. Interacts with RHEB. Interacts with MEAK7. Interacts with SIK3. Interacts with SLC38A7; this interaction promotes the recruitment of mTORC1 to the lysosome and its subsequent activation. Post-translationally, phosphorylation at Thr-51 by CDK1 promotes ubiquitination by the SCF(FBXW7) complex, followed by degradation. In terms of processing, ubiquitination by the SCF(FBXW7) and SCF(FBXW11) complexes following phosphorylation at Thr-51 by CDK1, leads to its degradation by the proteasome. Ubiquitination at Lys-305 and Lys-313 by TRAF2 via 'Lys-63'-linked polyubiquitin chains inhibits formation of the mTORC2 complex, while promoting formation of the mTORC1 complex: ubiquitination disrupts the interaction between MLST8 and MAPKAP1/SIN1 to favor mTORC1 assembly. Deubiquitination at Lys-305 and Lys-313 by OTUD7B promotes MLST8 interaction with MAPKAP1/SIN1, facilitating mTORC2 assembly. Sumoylation with SUMO1, SUMO2 and SUMO3 promotes assembly of both mTORC1 and mTORC2 complexes.

It is found in the lysosome membrane. It localises to the cytoplasm. Its function is as follows. Subunit of both mTORC1 and mTORC2, which regulates cell growth and survival in response to nutrient and hormonal signals. mTORC1 is activated in response to growth factors or amino acids. In response to nutrients, mTORC1 is recruited to the lysosome membrane and promotes protein, lipid and nucleotide synthesis by phosphorylating several substrates, such as ribosomal protein S6 kinase (RPS6KB1 and RPS6KB2) and EIF4EBP1 (4E-BP1). In the same time, it inhibits catabolic pathways by phosphorylating the autophagy initiation components ULK1 and ATG13, as well as transcription factor TFEB, a master regulators of lysosomal biogenesis and autophagy. The mTORC1 complex is inhibited in response to starvation and amino acid depletion. Within mTORC1, MLST8 interacts directly with MTOR and enhances its kinase activity. In nutrient-poor conditions, stabilizes the MTOR-RPTOR interaction and favors RPTOR-mediated inhibition of MTOR activity. As part of the mTORC2 complex, transduces signals from growth factors to pathways involved in proliferation, cytoskeletal organization, lipogenesis and anabolic output. mTORC2 is also activated by growth factors, but seems to be nutrient-insensitive. In response to growth factors, mTORC2 phosphorylates and activates AGC protein kinase family members, including AKT (AKT1, AKT2 and AKT3), PKC (PRKCA, PRKCB and PRKCE) and SGK1. mTORC2 functions upstream of Rho GTPases to regulate the actin cytoskeleton, probably by activating one or more Rho-type guanine nucleotide exchange factors. mTORC2 promotes the serum-induced formation of stress-fibers or F-actin. mTORC2 plays a critical role in AKT1 activation by mediating phosphorylation of different sites depending on the context, such as 'Thr-450', 'Ser-473', 'Ser-477' or 'Thr-479', facilitating the phosphorylation of the activation loop of AKT1 on 'Thr-308' by PDPK1/PDK1 which is a prerequisite for full activation. mTORC2 regulates the phosphorylation of SGK1 at 'Ser-422'. mTORC2 also modulates the phosphorylation of PRKCA on 'Ser-657'. Within mTORC2, MLST8 acts as a bridge between MAPKAP1/SIN1 and MTOR. In Mus musculus (Mouse), this protein is Target of rapamycin complex subunit LST8.